We begin with the raw amino-acid sequence, 164 residues long: UPF0114 protein Sbal223_3668 (164 aa).

Transmembrane regions (helical) follow at residues 15 to 35, 53 to 73, 108 to 128, and 136 to 156; these read IMAP…IKFF, LVLV…IVMV, KVAA…FMDV, and IMWY…MGYL.

This sequence belongs to the UPF0114 family.

Its subcellular location is the cell membrane. In Shewanella baltica (strain OS223), this protein is UPF0114 protein Sbal223_3668.